The following is a 388-amino-acid chain: Chorismate synthase (388 aa).

NADP(+) is bound by residues Arg39 and Arg45. The tract at residues Glu95 to Lys118 is disordered. FMN-binding positions include Arg130–Ser132, Asn251–Ala252, Gly296, Lys311–Thr315, and Arg337.

It belongs to the chorismate synthase family. In terms of assembly, homotetramer. It depends on FMNH2 as a cofactor.

It carries out the reaction 5-O-(1-carboxyvinyl)-3-phosphoshikimate = chorismate + phosphate. It participates in metabolic intermediate biosynthesis; chorismate biosynthesis; chorismate from D-erythrose 4-phosphate and phosphoenolpyruvate: step 7/7. Its function is as follows. Catalyzes the anti-1,4-elimination of the C-3 phosphate and the C-6 proR hydrogen from 5-enolpyruvylshikimate-3-phosphate (EPSP) to yield chorismate, which is the branch point compound that serves as the starting substrate for the three terminal pathways of aromatic amino acid biosynthesis. This reaction introduces a second double bond into the aromatic ring system. The sequence is that of Chorismate synthase from Listeria welshimeri serovar 6b (strain ATCC 35897 / DSM 20650 / CCUG 15529 / CIP 8149 / NCTC 11857 / SLCC 5334 / V8).